We begin with the raw amino-acid sequence, 278 residues long: HTH-type transcriptional activator RhaS (278 aa).

The 99-residue stretch at 174–272 (NQLMAWLEDH…NWSPRDIRQG (99 aa)) folds into the HTH araC/xylS-type domain. 2 consecutive DNA-binding regions (H-T-H motif) follow at residues 191–212 (EAVA…KQHT) and 239–262 (VTEI…RREF).

Binds DNA as a dimer.

Its subcellular location is the cytoplasm. In terms of biological role, activates expression of the rhaBAD and rhaT operons. The sequence is that of HTH-type transcriptional activator RhaS from Salmonella dublin (strain CT_02021853).